The sequence spans 1086 residues: Tudor domain-containing protein 7 (1086 aa).

HTH OST-type domains are found at residues 3–76 (EADL…YAVA) and 222–291 (KMDE…YPAR). Residues 295–306 (PLKSDQDPEKEL) are compositionally biased toward basic and acidic residues. Residues 295–324 (PLKSDQDPEKELPPPPPAPKQEVPSQGSPA) form a disordered region. Positions 325-394 (VMPDVKEKVA…TQKAILYAKL (70 aa)) constitute an HTH OST-type 3 domain. Tudor domains are found at residues 501 to 558 (TVHV…FCSL) and 691 to 748 (LPFC…FLQE). Residues 844-866 (AASSPGNRNGGTPAPGSPAESLR) form a disordered region. A Phosphoserine modification is found at serine 847. The interaction with CDK17 stretch occupies residues 849–1086 (GNRNGGTPAP…QYLLELSKVN (238 aa)). The interval 881–1086 (TSSFSLEELP…QYLLELSKVN (206 aa)) is interaction with CABLES1.

It belongs to the TDRD7 family. As to quaternary structure, found in a mRNP complex, at least composed of TDRD1, TDRD6, TDRD7 and DDX4. Found in a complex containing CABLES1, CDK16 and CDK17. Interacts with CABLES1, CDK17 and PIWIL1. Mainly expressed in testis. Expressed in spermatogonia, spermatocytes and round spermatids (at protein level). Also expressed in the developing lens.

It localises to the cytoplasm. Its function is as follows. Component of specific cytoplasmic RNA granules involved in post-transcriptional regulation of specific genes: probably acts by binding to specific mRNAs and regulating their translation. Required for lens transparency during lens development, by regulating translation of genes such as CRYBB3 and HSPB1 in the developing lens. Also required during spermatogenesis. The sequence is that of Tudor domain-containing protein 7 (Tdrd7) from Mus musculus (Mouse).